A 414-amino-acid polypeptide reads, in one-letter code: MNNLPRNSQFDSSSIINDLPLDLLDEILFRLEPKSMAMMRCTNNSIKSYLSDPRFGPEYPSWVRPSLFNLGSYGATYVCCHPLVSSCDYMSPGNGVELFDGSADCYIFGSCSGLLLLYIGCLFVANPLTKRFRILDHSGSKLIPMIVNGGLKGLSGISYPGGNVACTERAMCVGFAVNRNLTTKRFKIVGILEMENVYGFEINEGDSWRLSETSITTSSKSDLTTRMKPVYLDNTLHWLRNDGSIMSFNPETEQACLIPSIFHREPDTKLLFAESVKINRLTLISGTIETISVYTLVENHKWTLTRRIKNISIEEETLVYWNIAMYDGKCLVVRVKKMGLEPLASVLHVYDMEANSWGVLVSTLAWPNCVRDFYKLTPSLFFVEEDEQQKVLVASNDRRISYINSIMGLIDTTK.

In terms of domain architecture, F-box spans 13–65; that stretch reads SSIINDLPLDLLDEILFRLEPKSMAMMRCTNNSIKSYLSDPRFGPEYPSWVRP. Kelch repeat units follow at residues 281-328 and 331-378; these read LTLI…MYDG and LVVR…KLTP.

Interacts with DEK3.

Its pathway is protein modification; protein ubiquitination. Functionally, probable component of an E3 ubiquitin ligase complex. This Arabidopsis thaliana (Mouse-ear cress) protein is Putative F-box/kelch-repeat protein At1g20940.